The sequence spans 178 residues: ATP synthase subunit b (178 aa).

A helical transmembrane segment spans residues 30 to 50 (FFFVLAIFLIVLAVIGTFVVP).

Belongs to the ATPase B chain family. In terms of assembly, F-type ATPases have 2 components, F(1) - the catalytic core - and F(0) - the membrane proton channel. F(1) has five subunits: alpha(3), beta(3), gamma(1), delta(1), epsilon(1). F(0) has three main subunits: a(1), b(2) and c(10-14). The alpha and beta chains form an alternating ring which encloses part of the gamma chain. F(1) is attached to F(0) by a central stalk formed by the gamma and epsilon chains, while a peripheral stalk is formed by the delta and b chains.

Its subcellular location is the cell membrane. Functionally, f(1)F(0) ATP synthase produces ATP from ADP in the presence of a proton or sodium gradient. F-type ATPases consist of two structural domains, F(1) containing the extramembraneous catalytic core and F(0) containing the membrane proton channel, linked together by a central stalk and a peripheral stalk. During catalysis, ATP synthesis in the catalytic domain of F(1) is coupled via a rotary mechanism of the central stalk subunits to proton translocation. In terms of biological role, component of the F(0) channel, it forms part of the peripheral stalk, linking F(1) to F(0). This chain is ATP synthase subunit b, found in Mycobacterium avium (strain 104).